We begin with the raw amino-acid sequence, 75 residues long: Conotoxin Im23.5 (75 aa).

Positions 1-23 (MKFFTCLLLLLVVLTVVFDNVDA) are cleaved as a signal peptide. Disulfide bonds link Cys24–Cys28, Cys37–Cys40, and Cys41–Cys43. Residues 24–50 (CDRSCTGVMGHPSCATCCACFTSAGKR) constitute a propeptide that is removed on maturation.

In terms of tissue distribution, expressed by the venom duct.

The protein resides in the secreted. Probable neurotoxin. The sequence is that of Conotoxin Im23.5 from Conus imperialis (Imperial cone).